A 599-amino-acid polypeptide reads, in one-letter code: UvrABC system protein C (599 aa).

Residues 13 to 91 (NLPGVYRMIN…IKGFMPRYNV (79 aa)) enclose the GIY-YIG domain. Residues 200-235 (QQVMDELGEKMNEAAEKMEYELAAVYRDRIQSLRQV) enclose the UVR domain.

It belongs to the UvrC family. In terms of assembly, interacts with UvrB in an incision complex.

It localises to the cytoplasm. The UvrABC repair system catalyzes the recognition and processing of DNA lesions. UvrC both incises the 5' and 3' sides of the lesion. The N-terminal half is responsible for the 3' incision and the C-terminal half is responsible for the 5' incision. This chain is UvrABC system protein C, found in Methylobacillus flagellatus (strain ATCC 51484 / DSM 6875 / VKM B-1610 / KT).